A 557-amino-acid chain; its full sequence is MKEKIRKKILLASEEPGVYIFKNKGVPIYIGKAKRLSSRLRSYLNPQTEKVFRIVEEADELETIVVMNEREAFILEANLIKKYRPKYNVRLKDTNFYPYIRISDDEIPYVEIVKRKLRDGTYFGPYTSVQFVRNLLEILQKIMGFRTCKSDLKRIKRPCFLYHLGRCIGPCIGNIESHEEAIRKLREFLSGNMEEVFDYLKEKMETHSKMLDFENAAKYRDLLLNLSNVLESQGVVFEENINCDVLVHAHDLFVVLRVRNGYLVGKISFEMEGGSVEDFIREYYISGRGDIPKTLILESDLDEMDYSSLGFEYVGPPRSTTEEDLLEKAKKNLENELKMRGLRKEALEELMKLLNMKDFPYRIEGIDISHLQGKYTVASLVVFEDGFPKKSDYRRYKIEQDHPDDYESIRTVVKRRYSKHPLPNLLFVDGGIGQVNAAIEALKEIGKDCPVVGLAKKEETVVFENREIHLPHDHPVLRLLVQIRDETHRFAVSYHRKRREKESLRSVLDNVPGIGPIRKKKLIEHFGSLENIRSASLEEIARVIGSTEIARRVLDIL.

The GIY-YIG domain occupies 14–89 (EEPGVYIFKN…IKKYRPKYNV (76 aa)). The region spanning 194 to 229 (EEVFDYLKEKMETHSKMLDFENAAKYRDLLLNLSNV) is the UVR domain.

It belongs to the UvrC family. Interacts with UvrB in an incision complex.

It localises to the cytoplasm. The UvrABC repair system catalyzes the recognition and processing of DNA lesions. UvrC both incises the 5' and 3' sides of the lesion. The N-terminal half is responsible for the 3' incision and the C-terminal half is responsible for the 5' incision. The sequence is that of UvrABC system protein C from Thermotoga sp. (strain RQ2).